Reading from the N-terminus, the 90-residue chain is Nodulation protein NolS (90 aa).

Its function is as follows. Involved in nodulation of a particular host, M.lupulina. This Sinorhizobium meliloti (strain Sm2011 / Rm2011 / 2011) protein is Nodulation protein NolS (nolS).